Here is a 300-residue protein sequence, read N- to C-terminus: MSNHSSSIPELSDNGIRYYQTYNESLSLWPVRCKSFYISTRFGQTHVIASGPEDAPPLVLLHGALFSSTMWYPNIADWSSKYRTYAVDIIGDKNKSIPENVSGTRTDYANWLLDVFDNLGIEKSHMIGLSLGGLHTMNFLLRMPERVKSAAILSPAETFLPFHHDFYKYALGLTASNGVETFLNWMMNDQNVLHPIFVKQFKAGVMWQDGSRNPNPNADGFPYVFTDEELRSARVPILLLLGEHEVIYDPHSALHRASSFVPDIEAEVIKNAGHVLSMEQPTYVNERVMRFFNAETGISR.

His-274 functions as the Proton acceptor in the catalytic mechanism.

The protein belongs to the AB hydrolase superfamily. Monomer.

It carries out the reaction a carboxylic ester + H2O = an alcohol + a carboxylate + H(+). This is an uncharacterized protein from Bacillus subtilis (strain 168).